The chain runs to 110 residues: Large ribosomal subunit protein P2B (110 aa).

A Phosphoserine modification is found at Ser29. A Glycyl lysine isopeptide (Lys-Gly) (interchain with G-Cter in ubiquitin) cross-link involves residue Lys49. The interval 66–110 (VPTGGASSAAAGAAGAAAGGDAAEEEKEEEAKEESDDDMGFGLFD) is disordered. Residues 69–86 (GGASSAAAGAAGAAAGGD) show a composition bias toward low complexity. Residues 87-104 (AAEEEKEEEAKEESDDDM) are compositionally biased toward acidic residues. Ser100 bears the Phosphoserine mark.

It belongs to the eukaryotic ribosomal protein P1/P2 family. In terms of assembly, component of the large ribosomal subunit (LSU). Mature yeast ribosomes consist of a small (40S) and a large (60S) subunit. The 40S small subunit contains 1 molecule of ribosomal RNA (18S rRNA) and 33 different proteins (encoded by 57 genes). The large 60S subunit contains 3 rRNA molecules (25S, 5.8S and 5S rRNA) and 46 different proteins (encoded by 81 genes). The 5 acidic ribosomal P-proteins form the stalk structure of the 60S subunit. They are organized as a pentameric complex in which uL10/P0 interacts with 2 heterodimers, P1A-P2B and P1B-P2A. The N-terminus is not modified.

It localises to the cytoplasm. Functionally, component of the ribosome, a large ribonucleoprotein complex responsible for the synthesis of proteins in the cell. The small ribosomal subunit (SSU) binds messenger RNAs (mRNAs) and translates the encoded message by selecting cognate aminoacyl-transfer RNA (tRNA) molecules. The large subunit (LSU) contains the ribosomal catalytic site termed the peptidyl transferase center (PTC), which catalyzes the formation of peptide bonds, thereby polymerizing the amino acids delivered by tRNAs into a polypeptide chain. The nascent polypeptides leave the ribosome through a tunnel in the LSU and interact with protein factors that function in enzymatic processing, targeting, and the membrane insertion of nascent chains at the exit of the ribosomal tunnel. The sequence is that of Large ribosomal subunit protein P2B from Saccharomyces cerevisiae (strain ATCC 204508 / S288c) (Baker's yeast).